The chain runs to 481 residues: Cysteine--tRNA ligase (481 aa).

Residue cysteine 43 coordinates Zn(2+). The short motif at alanine 45 to histidine 55 is the 'HIGH' region element. Zn(2+) is bound by residues cysteine 221, histidine 246, and glutamate 250. Residues lysine 277–serine 281 carry the 'KMSKS' region motif. Position 280 (lysine 280) interacts with ATP.

The protein belongs to the class-I aminoacyl-tRNA synthetase family. In terms of assembly, monomer. Requires Zn(2+) as cofactor.

Its subcellular location is the cytoplasm. It catalyses the reaction tRNA(Cys) + L-cysteine + ATP = L-cysteinyl-tRNA(Cys) + AMP + diphosphate. In Mycobacterium sp. (strain JLS), this protein is Cysteine--tRNA ligase.